The following is a 1030-amino-acid chain: Translation initiation factor IF-2 (1030 aa).

Low complexity-rich tracts occupy residues 56–69 and 111–132; these read APSE…AADS and PNIV…APIK. Disordered regions lie at residues 56 to 361 and 394 to 434; these read APSE…KRRQ and SKPK…REQK. Residues 134-144 show a composition bias toward basic and acidic residues; sequence ARPEKSAEKPE. Low complexity predominate over residues 154 to 164; sequence AASAEPAKSPS. A compositionally biased stretch (basic and acidic residues) spans 188 to 206; sequence LLRKPEIVRRSEAKPERTS. Positions 259 to 273 are enriched in low complexity; sequence VAASASGVPAAASRV. The region spanning 522–695 is the tr-type G domain; sequence TRPPVVTVMG…LLVTEVEELV (174 aa). The tract at residues 531–538 is G1; it reads GHVDHGKT. 531-538 is a GTP binding site; that stretch reads GHVDHGKT. The interval 556-560 is G2; that stretch reads GITQH. The interval 581-584 is G3; sequence DTPG. GTP-binding positions include 581–585 and 635–638; these read DTPGH and NKCD. Residues 635 to 638 are G4; it reads NKCD. Positions 671–673 are G5; it reads SAI.

Belongs to the TRAFAC class translation factor GTPase superfamily. Classic translation factor GTPase family. IF-2 subfamily.

It localises to the cytoplasm. Its function is as follows. One of the essential components for the initiation of protein synthesis. Protects formylmethionyl-tRNA from spontaneous hydrolysis and promotes its binding to the 30S ribosomal subunits. Also involved in the hydrolysis of GTP during the formation of the 70S ribosomal complex. The chain is Translation initiation factor IF-2 from Synechococcus elongatus (strain ATCC 33912 / PCC 7942 / FACHB-805) (Anacystis nidulans R2).